The sequence spans 299 residues: Tyrosine recombinase XerC (299 aa).

The Core-binding (CB) domain occupies 1 to 81 (MDEAIRRFIE…SWRQFYHWLQ (81 aa)). Residues 102–281 (LLPKALPVDG…DFQHLAKVYD (180 aa)) form the Tyr recombinase domain. Residues Arg-142, Lys-166, His-233, Arg-236, and His-259 contribute to the active site. Tyr-268 functions as the O-(3'-phospho-DNA)-tyrosine intermediate in the catalytic mechanism.

This sequence belongs to the 'phage' integrase family. XerC subfamily. In terms of assembly, forms a cyclic heterotetrameric complex composed of two molecules of XerC and two molecules of XerD.

The protein localises to the cytoplasm. Site-specific tyrosine recombinase, which acts by catalyzing the cutting and rejoining of the recombining DNA molecules. The XerC-XerD complex is essential to convert dimers of the bacterial chromosome into monomers to permit their segregation at cell division. It also contributes to the segregational stability of plasmids. In Chromobacterium violaceum (strain ATCC 12472 / DSM 30191 / JCM 1249 / CCUG 213 / NBRC 12614 / NCIMB 9131 / NCTC 9757 / MK), this protein is Tyrosine recombinase XerC.